Reading from the N-terminus, the 481-residue chain is Abl interactor 1 (481 aa).

At alanine 2 the chain carries N-acetylalanine. The required for binding to WASF1 stretch occupies residues 18–79 (ALIESYQNLT…NNVLQLLDIQ (62 aa)). A t-SNARE coiled-coil homology domain is found at 45–107 (KALEETKAYT…DIHKEKVARR (63 aa)). Tyrosine 53 carries the phosphotyrosine modification. Positions 158–285 (AKHGNNQPAR…PGAAPGSQYG (128 aa)) are disordered. Residues 161 to 175 (GNNQPARTGTLSRTN) show a composition bias toward polar residues. Phosphothreonine is present on residues threonine 174 and threonine 178. Phosphoserine occurs at positions 183 and 187. Phosphotyrosine is present on tyrosine 213. Threonine 215 is subject to Phosphothreonine. Phosphoserine occurs at positions 216, 222, and 225. The segment covering 222 to 235 (SQHSPGRTASLNQR) has biased composition (polar residues). 2 stretches are compositionally biased toward low complexity: residues 248-258 (SRENSGSSSIG) and 272-282 (GPAAPGAAPGS). A phosphoserine mark is found at serine 292 and serine 296. 2 disordered regions span residues 318 to 348 (AQPHVNGGPLYSQNSISVAPPPPPMPQLTPQ) and 361 to 392 (NIADSPTPPPPPPPDDIPMFDDSPPPPPPPPV). 2 stretches are compositionally biased toward pro residues: residues 366-376 (PTPPPPPPPDD) and 383-392 (SPPPPPPPPV). In terms of domain architecture, SH3 spans 419–478 (NYIEKVVAIYDYTKDKDDELSFKEGAIIYVIKKNDDGWFEGVCNRVTGLFPGNYVESIMH). Tyrosine 428 is modified (phosphotyrosine). Serine 439 carries the phosphoserine modification. Threonine 480 carries the post-translational modification Phosphothreonine.

This sequence belongs to the ABI family. As to quaternary structure, interacts with ENAH, Abelson murine leukemia virus V-ABL, ABL1, STX1A, SNAP25, VAMP2, and through its N-terminus with WASF1. Part of a complex consisting of ABI1, STX1A and SNAP25. Part of a complex consisting of ABI1, EPS8 and SOS1. Interacts with EPS8, SOS1, SOS2, GRB2, SPTA1, and the first SH3 domain of NCK1. Component of the WAVE2 complex composed of ABI1, CYFIP1/SRA1, NCKAP1/NAP1 (NCKAP1l/HEM1 in hematopoietic cells) and WASF2/WAVE2. Interacts (via SH3 domain) with SHANK2 and SHANK3, but not SHANK1; the interaction is direct. Interacts with the heterodimer MYC:MAX; the interaction may enhance MYC:MAX transcriptional activity. Interacts with FNBP1L (via the SH3 domain), WASF2, and CDC42, but only in the presence of FNBP1L. Phosphorylated on tyrosine residues after serum stimulation or induction by v-Abl. Seems to be phosphorylated at Tyr-53 by ABL1, required for nuclear but not for synaptic localization. Widely expressed with highest levels in bone marrow, spleen, brain, testes, and embryonic brain. In adult brain prominently expressed in the neocortex, hippocampus and dentate gyrus.

The protein localises to the cytoplasm. It localises to the nucleus. It is found in the cell projection. Its subcellular location is the lamellipodium. The protein resides in the filopodium. The protein localises to the growth cone. It localises to the postsynaptic density. It is found in the cytoskeleton. Functionally, may act in negative regulation of cell growth and transformation by interacting with nonreceptor tyrosine kinases ABL1 and/or ABL2. In vitro, at least isoform 2 and isoform 4 suppress the transforming activity of Abelson murine leukemia virus (v-Abl) after overexpression in fibroblasts. May play a role in regulation EGF-induced Erk pathway activation. Involved in cytoskeletal reorganization and EGFR signaling. Together with EPS8 participates in transduction of signals from Ras to Rac. In vitro, a trimeric complex of ABI1, EPS8 and SOS1 exhibits Rac specific guanine nucleotide exchange factor (GEF) activity and ABI1 seems to act as an adapter in the complex. Regulates ABL1/c-Abl-mediated phosphorylation of ENAH. Recruits WASF1 to lamellipodia and there seems to regulate WASF1 protein level. In brain, seems to regulate the dendritic outgrowth and branching as well as to determine the shape and number of synaptic contacts of developing neurons. This chain is Abl interactor 1, found in Mus musculus (Mouse).